We begin with the raw amino-acid sequence, 792 residues long: Xaa-Pro dipeptidyl-peptidase (792 aa).

Catalysis depends on charge relay system residues serine 363, aspartate 482, and histidine 513.

This sequence belongs to the peptidase S15 family. Homodimer.

The protein localises to the cytoplasm. It carries out the reaction Hydrolyzes Xaa-Pro-|- bonds to release unblocked, N-terminal dipeptides from substrates including Ala-Pro-|-p-nitroanilide and (sequentially) Tyr-Pro-|-Phe-Pro-|-Gly-Pro-|-Ile.. Functionally, removes N-terminal dipeptides sequentially from polypeptides having unsubstituted N-termini provided that the penultimate residue is proline. This chain is Xaa-Pro dipeptidyl-peptidase, found in Lactobacillus delbrueckii subsp. bulgaricus (strain ATCC BAA-365 / Lb-18).